The chain runs to 277 residues: Proteasome subunit beta type-7 (277 aa).

Residues methionine 1 to glycine 43 constitute a propeptide, removed in mature form. Residue threonine 44 is the Nucleophile of the active site.

The protein belongs to the peptidase T1B family. The 26S proteasome consists of a 20S proteasome core and two 19S regulatory subunits. The 20S proteasome core is a barrel-shaped complex made of 28 subunits that are arranged in four stacked rings. The two outer rings are each formed by seven alpha subunits, and the two inner rings are formed by seven beta subunits. The proteolytic activity is exerted by three beta-subunits PSMB5, PSMB6 and PSMB7.

It localises to the cytoplasm. The protein resides in the nucleus. It catalyses the reaction Cleavage of peptide bonds with very broad specificity.. Functionally, component of the 20S core proteasome complex involved in the proteolytic degradation of most intracellular proteins. This complex plays numerous essential roles within the cell by associating with different regulatory particles. Associated with two 19S regulatory particles, forms the 26S proteasome and thus participates in the ATP-dependent degradation of ubiquitinated proteins. The 26S proteasome plays a key role in the maintenance of protein homeostasis by removing misfolded or damaged proteins that could impair cellular functions, and by removing proteins whose functions are no longer required. Associated with the PA200 or PA28, the 20S proteasome mediates ubiquitin-independent protein degradation. This type of proteolysis is required in several pathways including spermatogenesis (20S-PA200 complex) or generation of a subset of MHC class I-presented antigenic peptides (20S-PA28 complex). Within the 20S core complex, PSMB7 displays a trypsin-like activity. The protein is Proteasome subunit beta type-7 (PSMB7) of Bos taurus (Bovine).